A 440-amino-acid polypeptide reads, in one-letter code: Cytochrome c biogenesis protein Ccs1 (440 aa).

Transmembrane regions (helical) follow at residues 25–45 (LQFS…GTVI), 84–104 (TWWF…CSIS), and 170–190 (LAPI…VLGL).

Belongs to the Ccs1/CcsB family. In terms of assembly, may interact with CcsA.

It localises to the plastid. The protein localises to the chloroplast thylakoid membrane. Required during biogenesis of c-type cytochromes (cytochrome c6 and cytochrome f) at the step of heme attachment. In Pyropia yezoensis (Susabi-nori), this protein is Cytochrome c biogenesis protein Ccs1.